A 362-amino-acid chain; its full sequence is Sulfate/thiosulfate import ATP-binding protein CysA (362 aa).

The 231-residue stretch at 13–243 folds into the ABC transporter domain; sequence ITVRDAYKRY…PTNAFVMSFL (231 aa). ATP is bound at residue 45–52; that stretch reads GPSGSGKS.

This sequence belongs to the ABC transporter superfamily. Sulfate/tungstate importer (TC 3.A.1.6) family. The complex is composed of two ATP-binding proteins (CysA), two transmembrane proteins (CysT and CysW) and a solute-binding protein (CysP).

The protein resides in the cell membrane. The catalysed reaction is sulfate(out) + ATP + H2O = sulfate(in) + ADP + phosphate + H(+). It carries out the reaction thiosulfate(out) + ATP + H2O = thiosulfate(in) + ADP + phosphate + H(+). In terms of biological role, part of the ABC transporter complex CysAWTP involved in sulfate/thiosulfate import. Responsible for energy coupling to the transport system. In Mycolicibacterium paratuberculosis (strain ATCC BAA-968 / K-10) (Mycobacterium paratuberculosis), this protein is Sulfate/thiosulfate import ATP-binding protein CysA.